Consider the following 597-residue polypeptide: FERM domain-containing protein 3 (597 aa).

The 281-residue stretch at 32–312 folds into the FERM domain; sequence MRCTIRLLDD…ENQAFYKYAK (281 aa). The tract at residues 409–435 is disordered; that stretch reads SAPLISSSPVKAAQEYEDPPSEEEDKI. Over residues 423-432 the composition is skewed to acidic residues; the sequence is EYEDPPSEEE. The helical transmembrane segment at 531–551 threads the bilayer; the sequence is LLVVGLGLLLFVFPLLLLLLE.

It localises to the membrane. Putative tumor suppressor gene that may be implicated in the origin and progression of lung cancer. This Pongo abelii (Sumatran orangutan) protein is FERM domain-containing protein 3 (FRMD3).